Consider the following 1504-residue polypeptide: NAC-alpha domain-containing protein 1 (1504 aa).

Disordered regions lie at residues K127 to W150, D208 to H261, P315 to S356, L396 to A436, D460 to Q525, G539 to V565, V701 to V812, D834 to A1064, P1099 to K1366, and P1430 to P1467. The segment covering S342–S354 has biased composition (low complexity). The segment covering Q398 to V407 has biased composition (acidic residues). Composition is skewed to low complexity over residues A408–D422 and S462–G475. Positions S510–Q525 are enriched in polar residues. Residues P775–T792 are compositionally biased toward polar residues. The span at P930–N939 shows a compositional bias: low complexity. Positions S958–T968 are enriched in polar residues. Over residues E989–R1005 the composition is skewed to basic and acidic residues. S998 carries the post-translational modification Phosphoserine. A compositionally biased stretch (polar residues) spans S1016–A1031. The segment covering P1159–Q1171 has biased composition (pro residues). Residues V1213–N1222 show a composition bias toward polar residues. S1268 carries the post-translational modification Phosphoserine. Residues S1354–V1419 enclose the NAC-A/B domain. Over residues E1451–G1464 the composition is skewed to acidic residues.

Belongs to the NAC-alpha family.

It is found in the cytoplasm. Its subcellular location is the nucleus. May prevent inappropriate targeting of non-secretory polypeptides to the endoplasmic reticulum (ER). May bind to nascent polypeptide chains as they emerge from the ribosome and block their interaction with the signal recognition particle (SRP), which normally targets nascent secretory peptides to the ER. May also reduce the inherent affinity of ribosomes for protein translocation sites in the ER membrane (M sites). The protein is NAC-alpha domain-containing protein 1 (Nacad) of Mus musculus (Mouse).